Here is a 361-residue protein sequence, read N- to C-terminus: DNA replication and repair protein RecF (361 aa).

Residue 30 to 37 (GPNGSGKT) participates in ATP binding.

The protein belongs to the RecF family.

Its subcellular location is the cytoplasm. In terms of biological role, the RecF protein is involved in DNA metabolism; it is required for DNA replication and normal SOS inducibility. RecF binds preferentially to single-stranded, linear DNA. It also seems to bind ATP. The protein is DNA replication and repair protein RecF of Yersinia pseudotuberculosis serotype IB (strain PB1/+).